A 413-amino-acid polypeptide reads, in one-letter code: ATP-dependent (S)-NAD(P)H-hydrate dehydratase (413 aa).

Residues 98 to 402 enclose the YjeF C-terminal domain; that stretch reads NLNHFLSYVP…KSVPNALVWG (305 aa). (6S)-NADPHX is bound by residues Gly-199 and 252-258; that span reads NFVEYRA. ATP-binding positions include 292–296 and 311–320; these read KGQED and GMPRRCGGQG. Asp-321 is a (6S)-NADPHX binding site.

Belongs to the NnrD/CARKD family. The cofactor is Mg(2+).

It catalyses the reaction (6S)-NADHX + ATP = ADP + phosphate + NADH + H(+). It carries out the reaction (6S)-NADPHX + ATP = ADP + phosphate + NADPH + H(+). Functionally, catalyzes the dehydration of the S-form of NAD(P)HX at the expense of ATP, which is converted to ADP. Together with NAD(P)HX epimerase, which catalyzes the epimerization of the S- and R-forms, the enzyme allows the repair of both epimers of NAD(P)HX, a damaged form of NAD(P)H that is a result of enzymatic or heat-dependent hydration. The protein is ATP-dependent (S)-NAD(P)H-hydrate dehydratase of Heterostelium pallidum (strain ATCC 26659 / Pp 5 / PN500) (Cellular slime mold).